We begin with the raw amino-acid sequence, 315 residues long: Protease HtpX homolog (315 aa).

Residues 16-36 (LFMGIGYLIGGASGALIALVV) form a helical membrane-spanning segment. Histidine 130 is a binding site for Zn(2+). The active site involves glutamate 131. A Zn(2+)-binding site is contributed by histidine 134. 2 helical membrane passes run 145–165 (ITAT…FFGG) and 172–192 (GPGL…AMLV). Residue glutamate 201 coordinates Zn(2+). Residues 282–315 (GGGGASIGRPAGPSPRGAPRSPWSGQPRARGPWG) form a disordered region. The segment covering 288-303 (IGRPAGPSPRGAPRSP) has biased composition (low complexity).

It belongs to the peptidase M48B family. Zn(2+) serves as cofactor.

The protein localises to the cell inner membrane. In Rhodopseudomonas palustris (strain BisB5), this protein is Protease HtpX homolog.